The following is a 317-amino-acid chain: MLFHAAEKTGHHFTIGAAGVDVFFVISGFIMWVISDRRSVTPVEFIADRARRIVPVYWLATGVMVAGALAGLFPNLVLTLEHVLASLFFVPARSPSSGEIWPVLVQGWTLNFEMLFYAVFAGSLFMPRNWRLPVVSGLFLALVIAGRVVAFDDAVMLTYTRPVILEFVAGMIIGEFWLKGRVPPLAVGSALFACSLGGFALIGVLGLPFDELTTGPLAVLLVIGVLSLEANGCVRALSLPGLLGDASYSIYLWHTFAISVVAKAGLAIGLGAPATMFAAVLSGTLIGIAAYMMLERPLLRRGRARRVTAGLAGRAAE.

Helical transmembrane passes span 14–34 (TIGAAGVDVFFVISGFIMWVI), 53–73 (IVPVYWLATGVMVAGALAGLF), 100–120 (IWPVLVQGWTLNFEMLFYAVF), 132–152 (LPVVSGLFLALVIAGRVVAFD), 185–205 (LAVGSALFACSLGGFALIGVL), 206–226 (GLPFDELTTGPLAVLLVIGVL), and 268–288 (IGLGAPATMFAAVLSGTLIGI).

This sequence belongs to the acyltransferase 3 family.

It is found in the cell membrane. Its function is as follows. Required for the acetyl modification of the third sugar (glucose) of the octasaccharide subunit of succinoglycan (EPS I). The protein is Exopolysaccharide production protein ExoZ (exoZ) of Rhizobium meliloti (strain 1021) (Ensifer meliloti).